Consider the following 75-residue polypeptide: Small ribosomal subunit protein bS18 (75 aa).

Belongs to the bacterial ribosomal protein bS18 family. In terms of assembly, part of the 30S ribosomal subunit. Forms a tight heterodimer with protein bS6.

Its function is as follows. Binds as a heterodimer with protein bS6 to the central domain of the 16S rRNA, where it helps stabilize the platform of the 30S subunit. The protein is Small ribosomal subunit protein bS18 of Buchnera aphidicola subsp. Baizongia pistaciae (strain Bp).